A 447-amino-acid chain; its full sequence is Probable butyrate:acetyl-CoA coenzyme A-transferase (447 aa).

Residue 220-224 (GIGGT) coordinates CoA. The active-site 5-glutamyl coenzyme A thioester intermediate is the E245. CoA is bound by residues I320 and G343.

The protein belongs to the acetyl-CoA hydrolase/transferase family.

It localises to the cytoplasm. The enzyme catalyses butanoate + acetyl-CoA = butanoyl-CoA + acetate. Its pathway is lipid metabolism; butanoate metabolism. Coenzyme A-transferase that converts butyrate to butyryl-CoA. Involved in the syntrophic growth of S.wolfei on butyrate in cooperation with methanogens or an appropriate hydrogen-scavenging bacterium, as part of the butyrate oxidation pathway. In Syntrophomonas wolfei subsp. wolfei (strain DSM 2245B / Goettingen), this protein is Probable butyrate:acetyl-CoA coenzyme A-transferase.